The chain runs to 108 residues: Trp operon repressor homolog (108 aa).

Residues 59 to 82 (QRQISQLLGVGVATITRGSNELKS) mediate DNA binding.

Belongs to the TrpR family. Homodimer.

It is found in the cytoplasm. In terms of biological role, this protein is an aporepressor. When complexed with L-tryptophan it binds the operator region of the trp operon and prevents the initiation of transcription. The polypeptide is Trp operon repressor homolog (Aliivibrio fischeri (strain ATCC 700601 / ES114) (Vibrio fischeri)).